The following is a 157-amino-acid chain: MKILYPGTFDPLTNGHLDLIERAEKIFGNLVVAVLENTSKTPTFNLERRIIQIKNSLSHLPNIEVISYSGLTVDCANDLKANLILRGLRAMSDFEYELQIAHTNKSLNNDIETIFLSTNTNYSFLSSSLVKEVAKFGGEINHMVPPPVEKDLKEYFK.

Substrate is bound at residue threonine 8. ATP-binding positions include 8 to 9 and histidine 16; that span reads TF. The substrate site is built by lysine 40, threonine 72, and arginine 86. ATP contacts are provided by residues 87 to 89, glutamate 97, and 122 to 128; these read GLR and YSFLSSS.

This sequence belongs to the bacterial CoaD family. Homohexamer. The cofactor is Mg(2+).

It localises to the cytoplasm. It carries out the reaction (R)-4'-phosphopantetheine + ATP + H(+) = 3'-dephospho-CoA + diphosphate. The protein operates within cofactor biosynthesis; coenzyme A biosynthesis; CoA from (R)-pantothenate: step 4/5. Its function is as follows. Reversibly transfers an adenylyl group from ATP to 4'-phosphopantetheine, yielding dephospho-CoA (dPCoA) and pyrophosphate. The protein is Phosphopantetheine adenylyltransferase of Prochlorococcus marinus (strain AS9601).